The chain runs to 355 residues: UDP-N-acetylglucosamine--N-acetylmuramyl-(pentapeptide) pyrophosphoryl-undecaprenol N-acetylglucosamine transferase (355 aa).

Residues 13 to 15 (TGG), asparagine 125, arginine 162, serine 190, isoleucine 244, and glutamine 289 each bind UDP-N-acetyl-alpha-D-glucosamine.

It belongs to the glycosyltransferase 28 family. MurG subfamily.

The protein localises to the cell inner membrane. It carries out the reaction di-trans,octa-cis-undecaprenyl diphospho-N-acetyl-alpha-D-muramoyl-L-alanyl-D-glutamyl-meso-2,6-diaminopimeloyl-D-alanyl-D-alanine + UDP-N-acetyl-alpha-D-glucosamine = di-trans,octa-cis-undecaprenyl diphospho-[N-acetyl-alpha-D-glucosaminyl-(1-&gt;4)]-N-acetyl-alpha-D-muramoyl-L-alanyl-D-glutamyl-meso-2,6-diaminopimeloyl-D-alanyl-D-alanine + UDP + H(+). It participates in cell wall biogenesis; peptidoglycan biosynthesis. Cell wall formation. Catalyzes the transfer of a GlcNAc subunit on undecaprenyl-pyrophosphoryl-MurNAc-pentapeptide (lipid intermediate I) to form undecaprenyl-pyrophosphoryl-MurNAc-(pentapeptide)GlcNAc (lipid intermediate II). The protein is UDP-N-acetylglucosamine--N-acetylmuramyl-(pentapeptide) pyrophosphoryl-undecaprenol N-acetylglucosamine transferase of Neisseria meningitidis serogroup C (strain 053442).